The sequence spans 285 residues: Polyamine aminopropyltransferase (285 aa).

Positions 5-241 constitute a PABS domain; it reads DNWYIEHFQP…GWWSVTMASK (237 aa). Gln-35 lines the S-methyl-5'-thioadenosine pocket. Spermidine contacts are provided by His-66 and Asp-90. S-methyl-5'-thioadenosine-binding positions include Asp-110 and 141–142; that span reads DG. Asp-160 (proton acceptor) is an active-site residue. Position 160 to 163 (160 to 163) interacts with spermidine; the sequence is DSTD. S-methyl-5'-thioadenosine is bound at residue Pro-167.

The protein belongs to the spermidine/spermine synthase family. In terms of assembly, homodimer or homotetramer.

The protein resides in the cytoplasm. It carries out the reaction S-adenosyl 3-(methylsulfanyl)propylamine + putrescine = S-methyl-5'-thioadenosine + spermidine + H(+). The protein operates within amine and polyamine biosynthesis; spermidine biosynthesis; spermidine from putrescine: step 1/1. In terms of biological role, catalyzes the irreversible transfer of a propylamine group from the amino donor S-adenosylmethioninamine (decarboxy-AdoMet) to putrescine (1,4-diaminobutane) to yield spermidine. This Xanthomonas euvesicatoria pv. vesicatoria (strain 85-10) (Xanthomonas campestris pv. vesicatoria) protein is Polyamine aminopropyltransferase.